A 554-amino-acid chain; its full sequence is uncharacterized protein (554 aa).

Disordered stretches follow at residues 1-127, 139-173, 293-395, and 416-509; these read MTTH…NYND, IEDDEEYEEIGDEESSSGIGGDSEFNDSLNGSKAG, NNNN…PLSE, and FGFS…RKIR. Composition is skewed to low complexity over residues 9-30, 46-55, and 63-125; these read SSSNSSSNNINNNNNNNNNNNI, DPTSSSSPTN, and SNSN…LINY. Residues 139–153 show a composition bias toward acidic residues; it reads IEDDEEYEEIGDEES. Positions 164–173 are enriched in polar residues; that stretch reads NDSLNGSKAG. 3 stretches are compositionally biased toward low complexity: residues 293 to 387, 416 to 449, and 461 to 484; these read NNNN…CSSN, FGFSLSSPTTSSSNNSSNNNNNNNNSNQFFSSIS, and SPPLQSLQSIQPPISQLNNNNNNH. Basic residues predominate over residues 485–508; that stretch reads HNNHHQNHHHQNHNHQHHSKKRKI.

This is an uncharacterized protein from Dictyostelium discoideum (Social amoeba).